The following is a 565-amino-acid chain: MDFLLALVLVSSLYLQAAAEFDGRWPRQIVSSIGLCRYGGRIDCCWGWARQSWGQCQPVCQPRCKHGECIGPNKCKCHPGYAGKTCNQDLNECGLKPRPCKHRCMNTYGSYKCYCLNGYMLMPDGSCSSALTCSMANCQYGCDVVKGQIRCQCPSPGLQLAPDGRTCVDVDECATGRASCPRFRQCVNTFGSYICKCHKGFDLMYIGGKYQCHDIDECSLGQYQCSSFARCYNIRGSYKCKCKEGYQGDGLTCVYIPKVMIEPSGPIHVPKGNGTILKGDTGNNNWIPDVGSTWWPPKTPYIPPIITNRPTSKPTTRPTPKPTPIPTPPPPPPLPTELRTPLPPTTPERPTTGLTTIAPAASTPPGGITVDNRVQTDPQKPRGDVFIPRQPSNDLFEIFEIERGVSADDEAKDDPGVLVHSCNFDHGLCGWIREKDNDLHWEPIRDPAGGQYLTVSAAKAPGGKAARLVLPLGRLMHSGDLCLSFRHKVTGLHSGTLQVFVRKHGAHGAALWGRNGGHGWRQTQITLRGADIKSVVFKGEKRRGHTGEIGLDDVSLKKGHCSEER.

Positions 1-19 (MDFLLALVLVSSLYLQAAA) are cleaved as a signal peptide. In terms of domain architecture, EGF-like 1 spans 52 to 87 (SWGQCQPVCQPRCKHGECIGPNKCKCHPGYAGKTCN). 6 disulfides stabilise this stretch: Cys56-Cys69, Cys60-Cys75, Cys77-Cys86, Cys93-Cys104, Cys100-Cys113, and Cys115-Cys127. One can recognise an EGF-like 2; calcium-binding domain in the interval 89 to 128 (DLNECGLKPRPCKHRCMNTYGSYKCYCLNGYMLMPDGSCS). Positions 132 to 168 (TCSMANCQYGCDVVKGQIRCQCPSPGLQLAPDGRTCV) constitute an EGF-like 3 domain. The EGF-like 4; calcium-binding domain maps to 169-213 (DVDECATGRASCPRFRQCVNTFGSYICKCHKGFDLMYIGGKYQCH). 6 cysteine pairs are disulfide-bonded: Cys173-Cys186, Cys180-Cys195, Cys197-Cys212, Cys218-Cys231, Cys225-Cys240, and Cys242-Cys253. One can recognise an EGF-like 5; calcium-binding domain in the interval 214 to 254 (DIDECSLGQYQCSSFARCYNIRGSYKCKCKEGYQGDGLTCV). Residues 301 to 389 (YIPPIITNRP…KPRGDVFIPR (89 aa)) form a disordered region. Residues 304-316 (PIITNRPTSKPTT) show a composition bias toward low complexity. Residues 317 to 347 (RPTPKPTPIPTPPPPPPLPTELRTPLPPTTP) are compositionally biased toward pro residues. An Integrin interaction motif is present at residues 382–384 (RGD). The MAM domain maps to 420 to 563 (HSCNFDHGLC…VSLKKGHCSE (144 aa)).

Belongs to the nephronectin family. In terms of assembly, homodimer and homotrimer. In terms of tissue distribution, expressed in kidney and lung and to a lower extent in brain, pregnant uterus, placenta, thyroid gland and blood vessels.

The protein resides in the secreted. It localises to the extracellular space. Its subcellular location is the extracellular matrix. Functional ligand of integrin alpha-8/beta-1 in kidney development. Regulates the expression of GDNF with integrin alpha-8/beta-1 which is essential for kidney development. May also play a role in the development and function of various tissues, regulating cell adhesion, spreading and survival through the binding of several integrins. This chain is Nephronectin (NPNT), found in Homo sapiens (Human).